Reading from the N-terminus, the 949-residue chain is Inactive atromentin synthetase invA3 (949 aa).

The segment at 38–460 (RAVSQYPNHE…SGRIKDTVVV (423 aa)) is adenylation (A) domain. The Carrier domain maps to 592–670 (ALSTETEKTL…NLAKYVDSLV (79 aa)). The tract at residues 597-667 (TEKTLAGIYA…VISNLAKYVD (71 aa)) is thiolation and peptide carrier (T) domain. The residue at position 629 (Ser629) is an O-(pantetheine 4'-phosphoryl)serine. The thioesterase (TE) domain stretch occupies residues 693-934 (PIFMVHPGMA…YTLMDFDHVA (242 aa)).

It belongs to the ATP-dependent AMP-binding enzyme family.

Functionally, inactive atromentin synthetase homolog. While the invA3 adenylation (A) domain is capable of adenylating 4-hydroxyphenylpyruvate (4-HPP), the invA3 enzyme is inactive because of its non-functional thioesterase (TE) domain. The polypeptide is Inactive atromentin synthetase invA3 (invA3) (Paxillus involutus (Naked brimcap)).